Here is a 39-residue protein sequence, read N- to C-terminus: Bacteriocin E50-52 (39 aa).

It is found in the secreted. In terms of biological role, bacteriocin active against the Gram-negative bacteria C.jejuni, Y.enterocolitica and Y.pseudotuberculosis, and the Gram-positive bacteria S.aureus, S.epidermidis, L.monocytogenes and Listeria spp. When added to the drinking water of chickens, causes a decrease in the levels of C.jejuni and S.enteritidis in the ceca, and in the levels of S.enteritidis in the liver and spleen. The protein is Bacteriocin E50-52 of Enterococcus faecium (Streptococcus faecium).